We begin with the raw amino-acid sequence, 567 residues long: Platelet glycoprotein V (567 aa).

The N-terminal stretch at 1-16 (MLRSALLSAVLPLLRA) is a signal peptide. Residues 17–50 (QPFPCPKTCKCVVRDAAQCSGGSVAHIAELGLPT) form the LRRNT domain. Topologically, residues 17-522 (QPFPCPKTCK…ESPNNRLYWG (506 aa)) are extracellular. N-linked (GlcNAc...) asparagine glycosylation is found at Asn-51 and Asn-67. 14 LRR repeats span residues 75–96 (VLQR…TFND), 99–120 (KLKT…ILDK), 123–144 (LLEQ…LFQQ), 147–168 (NLQE…LFSS), 171–193 (ELKL…LGAQ), 195–216 (KLEK…LLSN), 219–240 (ALTE…AFDR), 243–264 (NLSS…LFLH), 267–288 (SVSR…LFGE), 291–312 (GLRE…AFRN), 315–337 (GLQT…VFQG), 340–361 (ELRV…ALRG), 364–385 (HLRQ…LFRN), and 388–409 (SLES…VFAA). Asn-181 is a glycosylation site (N-linked (GlcNAc...) asparagine). N-linked (GlcNAc...) asparagine glycosylation is present at Asn-243. N-linked (GlcNAc...) asparagine glycosylation is found at Asn-298 and Asn-312. N-linked (GlcNAc...) asparagine glycosylation is present at Asn-385. One can recognise an LRRCT domain in the interval 421–474 (NPWLCDCGLWRFLQWLRHHPDILGRDEPPQCRGPEPRASLSFWELLQGDPWCPD). A helical membrane pass occupies residues 523-543 (LYILLLVAQAIIAAFIVFAMI). Residues 544 to 567 (KIGQLFRTLIREKLLLEAMGKSCN) are Cytoplasmic-facing.

The protein resides in the membrane. Its function is as follows. The GPIb-V-IX complex functions as the vWF receptor and mediates vWF-dependent platelet adhesion to blood vessels. The adhesion of platelets to injured vascular surfaces in the arterial circulation is a critical initiating event in hemostasis. The polypeptide is Platelet glycoprotein V (Gp5) (Mus musculus (Mouse)).